The chain runs to 778 residues: MKMTVDFEECLKDSPRFRAALEEVEGDVAELELKLDKLVKLCIAMIDTGKAFCLANKQFMNGIRDLAQYSSNDAVVETSLTKFSDSLQEMINFHTILFDQTQRSIKAQLQNFVKEDLRKFKDAKKQFEKVSEEKENALAKNAQVQRNKQHEVEEATNILTATRKCFRHIALDYVLQINVLQSKRRSEILKSMLSFMYAHLAFFHQGYDLFSELGPYMKDLGAQLDRLVVDAAKEKREMEQKHSTIQQKDFSSDDSKLEYNVDAANGIVMEGYLFKRASNAFKTWNRRWFSIQNNQLVYQKKFKDNPTVVVEDLRLCTVKHCEDIERRFCFEVVSPTKSCMLQADSEKLRQAWIKAVQTSIATAYREKGDESEKLDKKSSPSTGSLDSGNESKEKLLKGESALQRVQCVPGNASCCDCGLADPRWASINLGITLCIECSGIHRSLGVHFSKVRSLTLDTWEPELLKLMCELGNDVINRVYEANVEKMGIKKPQPGQRQEKEAYIKAKYVERKFVDKYSVSSSPPEQEKKVVSKDSEEKRLSIPKLGPGDQVRTSIQSSVKSNDSGIQQSSDDGRESLPSTVSANSLYEPEGERQDSSVFLDSKHLNPGLQLYRASYEKNLPKMAEALAHGADVNWANSEENKATPLIQAVLGGSLVTCEFLLQNGANVNQRDVQGRGPLHHATVLGHTGQVCLFLKRGANQHATDEEGKDPLSIAVEAANADIVTLLRLARMNEEMRESEGLYGQPGDETYQDIFRDFSQMASNNPEKLNRFQQDSQKF.

Positions 1-226 (MKMTVDFEEC…MKDLGAQLDR (226 aa)) constitute a BAR domain. The 96-residue stretch at 266–361 (GIVMEGYLFK…WIKAVQTSIA (96 aa)) folds into the PH domain. Residues 371-391 (SEKLDKKSSPSTGSLDSGNES) form a disordered region. Residues 379–388 (SPSTGSLDSG) are compositionally biased toward polar residues. Residues Ser384 and Ser387 each carry the phosphoserine modification. Residues 399 to 520 (ESALQRVQCV…KFVDKYSVSS (122 aa)) enclose the Arf-GAP domain. The C4-type zinc-finger motif lies at 414 to 437 (CCDCGLADPRWASINLGITLCIEC). Residues 518-596 (VSSSPPEQEK…EPEGERQDSS (79 aa)) are disordered. A Phosphoserine modification is found at Ser521. A compositionally biased stretch (basic and acidic residues) spans 524 to 539 (EQEKKVVSKDSEEKRL). Residues 550 to 569 (VRTSIQSSVKSNDSGIQQSS) show a composition bias toward polar residues. Phosphoserine is present on residues Ser581 and Ser584. ANK repeat units follow at residues 640–669 (NKAT…NVNQ), 673–702 (QGRG…NQHA), and 706–735 (EGKD…NEEM). Phosphotyrosine is present on Tyr742. Phosphoserine is present on Ser775.

Interacts with RAB35 (GTP-bound form); the interaction is direct and probably recruits ACAP2 to membranes. Interacts with MICALL1; the interaction is indirect through RAB35.

The protein localises to the endosome membrane. It localises to the cell membrane. GAP activity stimulated by phosphatidylinositol 4,5-bisphosphate (PIP2) and phosphatidic acid. In terms of biological role, GTPase-activating protein (GAP) for ADP ribosylation factor 6 (ARF6). Doesn't show GAP activity for RAB35. The sequence is that of Arf-GAP with coiled-coil, ANK repeat and PH domain-containing protein 2 (ACAP2) from Oryctolagus cuniculus (Rabbit).